Reading from the N-terminus, the 88-residue chain is Small ribosomal subunit protein bS20 (88 aa).

It belongs to the bacterial ribosomal protein bS20 family.

Functionally, binds directly to 16S ribosomal RNA. The sequence is that of Small ribosomal subunit protein bS20 from Maricaulis maris (strain MCS10) (Caulobacter maris).